A 321-amino-acid polypeptide reads, in one-letter code: Ribosomal RNA small subunit methyltransferase H (321 aa).

Residues 40–42 (GGH), aspartate 60, phenylalanine 84, aspartate 106, and glutamine 113 each bind S-adenosyl-L-methionine.

Belongs to the methyltransferase superfamily. RsmH family.

The protein localises to the cytoplasm. The enzyme catalyses cytidine(1402) in 16S rRNA + S-adenosyl-L-methionine = N(4)-methylcytidine(1402) in 16S rRNA + S-adenosyl-L-homocysteine + H(+). Specifically methylates the N4 position of cytidine in position 1402 (C1402) of 16S rRNA. This is Ribosomal RNA small subunit methyltransferase H from Pasteurella multocida (strain Pm70).